The chain runs to 192 residues: NADH-quinone oxidoreductase subunit B (192 aa).

Residues Cys71, Cys72, Cys136, and Cys166 each contribute to the [4Fe-4S] cluster site.

Belongs to the complex I 20 kDa subunit family. In terms of assembly, NDH-1 is composed of 14 different subunits. Subunits NuoB, C, D, E, F, and G constitute the peripheral sector of the complex. [4Fe-4S] cluster is required as a cofactor.

It localises to the cell inner membrane. The catalysed reaction is a quinone + NADH + 5 H(+)(in) = a quinol + NAD(+) + 4 H(+)(out). In terms of biological role, NDH-1 shuttles electrons from NADH, via FMN and iron-sulfur (Fe-S) centers, to quinones in the respiratory chain. The immediate electron acceptor for the enzyme in this species is believed to be ubiquinone. Couples the redox reaction to proton translocation (for every two electrons transferred, four hydrogen ions are translocated across the cytoplasmic membrane), and thus conserves the redox energy in a proton gradient. The protein is NADH-quinone oxidoreductase subunit B of Sinorhizobium medicae (strain WSM419) (Ensifer medicae).